The following is a 653-amino-acid chain: Acetyl-coenzyme A synthetase 1 (653 aa).

CoA-binding positions include 191–194 (RGGR), T311, and N335. Residues 387 to 389 (GEP), 411 to 416 (DTWWQT), D500, and R515 contribute to the ATP site. S523 serves as a coordination point for CoA. Position 526 (R526) interacts with ATP. Positions 537, 539, and 542 each coordinate Mg(2+). R584 contacts CoA. K609 is subject to N6-acetyllysine.

The protein belongs to the ATP-dependent AMP-binding enzyme family. Requires Mg(2+) as cofactor. Post-translationally, acetylated. Deacetylation by the SIR2-homolog deacetylase activates the enzyme.

It catalyses the reaction acetate + ATP + CoA = acetyl-CoA + AMP + diphosphate. In terms of biological role, catalyzes the conversion of acetate into acetyl-CoA (AcCoA), an essential intermediate at the junction of anabolic and catabolic pathways. AcsA undergoes a two-step reaction. In the first half reaction, AcsA combines acetate with ATP to form acetyl-adenylate (AcAMP) intermediate. In the second half reaction, it can then transfer the acetyl group from AcAMP to the sulfhydryl group of CoA, forming the product AcCoA. The polypeptide is Acetyl-coenzyme A synthetase 1 (Pseudomonas putida (strain ATCC 47054 / DSM 6125 / CFBP 8728 / NCIMB 11950 / KT2440)).